A 186-amino-acid chain; its full sequence is ATP synthase subunit b, chloroplastic (186 aa).

A helical transmembrane segment spans residues 27–49 (LATNPINLSVVLGVLIFFGKGVL).

It belongs to the ATPase B chain family. F-type ATPases have 2 components, F(1) - the catalytic core - and F(0) - the membrane proton channel. F(1) has five subunits: alpha(3), beta(3), gamma(1), delta(1), epsilon(1). F(0) has four main subunits: a(1), b(1), b'(1) and c(10-14). The alpha and beta chains form an alternating ring which encloses part of the gamma chain. F(1) is attached to F(0) by a central stalk formed by the gamma and epsilon chains, while a peripheral stalk is formed by the delta, b and b' chains.

Its subcellular location is the plastid. It localises to the chloroplast thylakoid membrane. F(1)F(0) ATP synthase produces ATP from ADP in the presence of a proton or sodium gradient. F-type ATPases consist of two structural domains, F(1) containing the extramembraneous catalytic core and F(0) containing the membrane proton channel, linked together by a central stalk and a peripheral stalk. During catalysis, ATP synthesis in the catalytic domain of F(1) is coupled via a rotary mechanism of the central stalk subunits to proton translocation. Functionally, component of the F(0) channel, it forms part of the peripheral stalk, linking F(1) to F(0). The chain is ATP synthase subunit b, chloroplastic from Illicium oligandrum (Star anise).